A 226-amino-acid polypeptide reads, in one-letter code: UPF0173 metal-dependent hydrolase CHY_0920 (226 aa).

It belongs to the UPF0173 family.

The polypeptide is UPF0173 metal-dependent hydrolase CHY_0920 (Carboxydothermus hydrogenoformans (strain ATCC BAA-161 / DSM 6008 / Z-2901)).